A 205-amino-acid polypeptide reads, in one-letter code: Ribosome maturation factor RimP (205 aa).

Belongs to the RimP family.

The protein resides in the cytoplasm. Required for maturation of 30S ribosomal subunits. This Sinorhizobium medicae (strain WSM419) (Ensifer medicae) protein is Ribosome maturation factor RimP.